Reading from the N-terminus, the 539-residue chain is Phosphoenolpyruvate carboxykinase (ATP) (539 aa).

Substrate is bound by residues arginine 64, tyrosine 206, and lysine 212. Residues lysine 212, histidine 231, and 247–255 each bind ATP; that span reads GLSGTGKTT. The Mn(2+) site is built by lysine 212 and histidine 231. Position 268 (aspartate 268) interacts with Mn(2+). ATP is bound by residues glutamate 296, arginine 332, 448 to 449, and threonine 454; that span reads RI. Arginine 332 contacts substrate.

This sequence belongs to the phosphoenolpyruvate carboxykinase (ATP) family. In terms of assembly, monomer. The cofactor is Mn(2+).

It is found in the cytoplasm. The catalysed reaction is oxaloacetate + ATP = phosphoenolpyruvate + ADP + CO2. The protein operates within carbohydrate biosynthesis; gluconeogenesis. Functionally, involved in the gluconeogenesis. Catalyzes the conversion of oxaloacetate (OAA) to phosphoenolpyruvate (PEP) through direct phosphoryl transfer between the nucleoside triphosphate and OAA. The protein is Phosphoenolpyruvate carboxykinase (ATP) of Citrobacter koseri (strain ATCC BAA-895 / CDC 4225-83 / SGSC4696).